The following is a 119-amino-acid chain: MARIAGINIPTHKHAWVALTSIYGIGRTRALSICNAAGVPHDRRVRDLNDAEVEALRQEVGNYVIEGDLRRSVAMDIKRLMDLGCYRGMRHRRGLPVRGQQTQTNARTRKGPRRGPASR.

Residues 92-119 are disordered; it reads RRGLPVRGQQTQTNARTRKGPRRGPASR.

It belongs to the universal ribosomal protein uS13 family. In terms of assembly, part of the 30S ribosomal subunit. Forms a loose heterodimer with protein S19. Forms two bridges to the 50S subunit in the 70S ribosome.

Functionally, located at the top of the head of the 30S subunit, it contacts several helices of the 16S rRNA. In the 70S ribosome it contacts the 23S rRNA (bridge B1a) and protein L5 of the 50S subunit (bridge B1b), connecting the 2 subunits; these bridges are implicated in subunit movement. Contacts the tRNAs in the A and P-sites. In Halorhodospira halophila (strain DSM 244 / SL1) (Ectothiorhodospira halophila (strain DSM 244 / SL1)), this protein is Small ribosomal subunit protein uS13.